A 308-amino-acid chain; its full sequence is Protein translocase subunit SecF (308 aa).

6 consecutive transmembrane segments (helical) span residues 28-48 (SIILSLISFIWIGIYKFNFGI), 140-160 (IEAGAMAMLFSFLAIMVYIWV), 164-184 (WYFGFGILIALVHDVILALGF), 194-214 (LSTIAAVLTIIGYSVNDSVVI), 246-266 (ILTVITTLLANLALILFGGEA), and 272-292 (ILVFFGIIVGTYSSIFISAPI).

This sequence belongs to the SecD/SecF family. SecF subfamily. Forms a complex with SecD. Part of the essential Sec protein translocation apparatus which comprises SecA, SecYEG and auxiliary proteins SecDF-YajC and YidC.

Its subcellular location is the cell inner membrane. Its function is as follows. Part of the Sec protein translocase complex. Interacts with the SecYEG preprotein conducting channel. SecDF uses the proton motive force (PMF) to complete protein translocation after the ATP-dependent function of SecA. The polypeptide is Protein translocase subunit SecF (Rickettsia rickettsii (strain Sheila Smith)).